The primary structure comprises 403 residues: CCA-adding enzyme (403 aa).

Residues Gly32 and Arg35 each coordinate ATP. CTP-binding residues include Gly32 and Arg35. Positions 45 and 47 each coordinate Mg(2+). The ATP site is built by Arg116, Asp159, Arg162, Arg165, and Arg168. The CTP site is built by Arg116, Asp159, Arg162, Arg165, and Arg168.

The protein belongs to the tRNA nucleotidyltransferase/poly(A) polymerase family. Bacterial CCA-adding enzyme type 3 subfamily. As to quaternary structure, homodimer. It depends on Mg(2+) as a cofactor.

The enzyme catalyses a tRNA precursor + 2 CTP + ATP = a tRNA with a 3' CCA end + 3 diphosphate. It catalyses the reaction a tRNA with a 3' CCA end + 2 CTP + ATP = a tRNA with a 3' CCACCA end + 3 diphosphate. Catalyzes the addition and repair of the essential 3'-terminal CCA sequence in tRNAs without using a nucleic acid template. Adds these three nucleotides in the order of C, C, and A to the tRNA nucleotide-73, using CTP and ATP as substrates and producing inorganic pyrophosphate. tRNA 3'-terminal CCA addition is required both for tRNA processing and repair. Also involved in tRNA surveillance by mediating tandem CCA addition to generate a CCACCA at the 3' terminus of unstable tRNAs. While stable tRNAs receive only 3'-terminal CCA, unstable tRNAs are marked with CCACCA and rapidly degraded. The protein is CCA-adding enzyme of Leuconostoc citreum (strain KM20).